Consider the following 161-residue polypeptide: Regulator of ribonuclease activity A (161 aa).

It belongs to the RraA family. As to quaternary structure, homotrimer. Binds to both RNA-binding sites in the C-terminal region of Rne and to RhlB.

It localises to the cytoplasm. Functionally, globally modulates RNA abundance by binding to RNase E (Rne) and regulating its endonucleolytic activity. Can modulate Rne action in a substrate-dependent manner by altering the composition of the degradosome. Modulates RNA-binding and helicase activities of the degradosome. In Citrobacter koseri (strain ATCC BAA-895 / CDC 4225-83 / SGSC4696), this protein is Regulator of ribonuclease activity A.